We begin with the raw amino-acid sequence, 319 residues long: Acetyl-coenzyme A carboxylase carboxyl transferase subunit alpha (319 aa).

The region spanning 35–296 (NLDEEVQRLR…KAQLLADLSD (262 aa)) is the CoA carboxyltransferase C-terminal domain.

This sequence belongs to the AccA family. As to quaternary structure, acetyl-CoA carboxylase is a heterohexamer composed of biotin carboxyl carrier protein (AccB), biotin carboxylase (AccC) and two subunits each of ACCase subunit alpha (AccA) and ACCase subunit beta (AccD).

It localises to the cytoplasm. The catalysed reaction is N(6)-carboxybiotinyl-L-lysyl-[protein] + acetyl-CoA = N(6)-biotinyl-L-lysyl-[protein] + malonyl-CoA. It participates in lipid metabolism; malonyl-CoA biosynthesis; malonyl-CoA from acetyl-CoA: step 1/1. Functionally, component of the acetyl coenzyme A carboxylase (ACC) complex. First, biotin carboxylase catalyzes the carboxylation of biotin on its carrier protein (BCCP) and then the CO(2) group is transferred by the carboxyltransferase to acetyl-CoA to form malonyl-CoA. The chain is Acetyl-coenzyme A carboxylase carboxyl transferase subunit alpha from Yersinia enterocolitica serotype O:8 / biotype 1B (strain NCTC 13174 / 8081).